A 182-amino-acid polypeptide reads, in one-letter code: Large ribosomal subunit protein uL10 (182 aa).

It belongs to the universal ribosomal protein uL10 family. Part of the ribosomal stalk of the 50S ribosomal subunit. The N-terminus interacts with L11 and the large rRNA to form the base of the stalk. The C-terminus forms an elongated spine to which L12 dimers bind in a sequential fashion forming a multimeric L10(L12)X complex.

Functionally, forms part of the ribosomal stalk, playing a central role in the interaction of the ribosome with GTP-bound translation factors. This is Large ribosomal subunit protein uL10 from Gluconacetobacter diazotrophicus (strain ATCC 49037 / DSM 5601 / CCUG 37298 / CIP 103539 / LMG 7603 / PAl5).